The primary structure comprises 261 residues: MLIVLSPAKSLDYETPPRVKSHTLPRFIDRSATLIERLRKLAPQDVASLMDISDKLAVLNVTRYADWSPEFTAANSKQAVLAFNGDVYDGLDAKTLSTDDLAFAQKHIRILSGLYGVLRPMDWMQPYRLEMGTRLDNAAGKDLYAFWGDDVTALINKDMAELKHEGSLTLVNLASEEYFKVVRPKVLAARVITPVFEDWKGGRYKIISFHAKRARGTMARYAVTHRVTDPAQLKRFNEDGYAFDKAASDDARWVFRRRLED.

Belongs to the UPF0246 family.

The sequence is that of UPF0246 protein Rmet_0978 from Cupriavidus metallidurans (strain ATCC 43123 / DSM 2839 / NBRC 102507 / CH34) (Ralstonia metallidurans).